Reading from the N-terminus, the 573-residue chain is Proline--tRNA ligase (573 aa).

The protein belongs to the class-II aminoacyl-tRNA synthetase family. ProS type 1 subfamily. As to quaternary structure, homodimer.

It is found in the cytoplasm. The catalysed reaction is tRNA(Pro) + L-proline + ATP = L-prolyl-tRNA(Pro) + AMP + diphosphate. Functionally, catalyzes the attachment of proline to tRNA(Pro) in a two-step reaction: proline is first activated by ATP to form Pro-AMP and then transferred to the acceptor end of tRNA(Pro). As ProRS can inadvertently accommodate and process non-cognate amino acids such as alanine and cysteine, to avoid such errors it has two additional distinct editing activities against alanine. One activity is designated as 'pretransfer' editing and involves the tRNA(Pro)-independent hydrolysis of activated Ala-AMP. The other activity is designated 'posttransfer' editing and involves deacylation of mischarged Ala-tRNA(Pro). The misacylated Cys-tRNA(Pro) is not edited by ProRS. The sequence is that of Proline--tRNA ligase from Caldanaerobacter subterraneus subsp. tengcongensis (strain DSM 15242 / JCM 11007 / NBRC 100824 / MB4) (Thermoanaerobacter tengcongensis).